A 165-amino-acid chain; its full sequence is Phosphopantetheine adenylyltransferase (165 aa).

Ser-9 serves as a coordination point for substrate. ATP contacts are provided by residues 9-10 and His-17; that span reads SF. Substrate is bound by residues Lys-41, Val-73, and Arg-87. ATP contacts are provided by residues 88-90, Glu-98, and 123-129; these read GLR and FTLLSSS.

This sequence belongs to the bacterial CoaD family. Homohexamer. The cofactor is Mg(2+).

It is found in the cytoplasm. The enzyme catalyses (R)-4'-phosphopantetheine + ATP + H(+) = 3'-dephospho-CoA + diphosphate. It participates in cofactor biosynthesis; coenzyme A biosynthesis; CoA from (R)-pantothenate: step 4/5. Functionally, reversibly transfers an adenylyl group from ATP to 4'-phosphopantetheine, yielding dephospho-CoA (dPCoA) and pyrophosphate. The chain is Phosphopantetheine adenylyltransferase from Herpetosiphon aurantiacus (strain ATCC 23779 / DSM 785 / 114-95).